The following is a 433-amino-acid chain: Glutamate-rich protein 2 (433 aa).

5 disordered regions span residues 56-86, 113-161, 189-273, 308-344, and 394-433; these read VPAA…LAPP, DSAS…KHPQ, SRQN…SIET, CLED…TRAP, and EKAQ…EDGS. Residues 63 to 85 show a composition bias toward pro residues; the sequence is PAPPPPRALRPAPGPPRSAPLAP. Polar residues predominate over residues 114–127; it reads SASQARGSEPSSSA. Composition is skewed to basic and acidic residues over residues 199–214 and 244–258; these read DPKE…EKPQ and ARKE…DKVS. Over residues 259–273 the composition is skewed to polar residues; it reads LKSSENRPSSRSIET. 2 stretches are compositionally biased toward acidic residues: residues 308–334 and 397–433; these read CLED…EDDE and QEEE…EDGS.

In Rattus norvegicus (Rat), this protein is Glutamate-rich protein 2 (Erich2).